A 123-amino-acid chain; its full sequence is Fluoride-specific ion channel FluC (123 aa).

4 consecutive transmembrane segments (helical) span residues 4–24 (VYIAIFGALGCLSRFMVSGWV), 31–51 (ALPYGTLAVNVIGSLLLGLLM), 64–83 (IRMGITTGFMGGFTTFSTFS), and 100–120 (ANILLNVTVSVVFAGLGIFLA). Na(+) contacts are provided by G74 and T77.

It belongs to the fluoride channel Fluc/FEX (TC 1.A.43) family.

It localises to the cell inner membrane. It carries out the reaction fluoride(in) = fluoride(out). With respect to regulation, na(+) is not transported, but it plays an essential structural role and its presence is essential for fluoride channel function. In terms of biological role, fluoride-specific ion channel. Important for reducing fluoride concentration in the cell, thus reducing its toxicity. In Syntrophotalea carbinolica (strain DSM 2380 / NBRC 103641 / GraBd1) (Pelobacter carbinolicus), this protein is Fluoride-specific ion channel FluC.